The following is a 294-amino-acid chain: N-acetylmuramic acid 6-phosphate etherase (294 aa).

The region spanning 54–217 (VIQSFEEEGR…STASMIGVGK (164 aa)) is the SIS domain. Residue Glu82 is the Proton donor of the active site. Glu113 is a catalytic residue.

The protein belongs to the GCKR-like family. MurNAc-6-P etherase subfamily. Homodimer.

It carries out the reaction N-acetyl-D-muramate 6-phosphate + H2O = N-acetyl-D-glucosamine 6-phosphate + (R)-lactate. The protein operates within amino-sugar metabolism; N-acetylmuramate degradation. In terms of biological role, specifically catalyzes the cleavage of the D-lactyl ether substituent of MurNAc 6-phosphate, producing GlcNAc 6-phosphate and D-lactate. The protein is N-acetylmuramic acid 6-phosphate etherase of Bacillus cereus (strain 03BB102).